The following is a 61-amino-acid chain: UPF0434 protein PA14_25520 (61 aa).

Belongs to the UPF0434 family.

This is UPF0434 protein PA14_25520 from Pseudomonas aeruginosa (strain UCBPP-PA14).